The following is a 423-amino-acid chain: F-box protein At1g52495 (423 aa).

Residues 49-95 form the F-box domain; the sequence is KLKDVHLPLDLIVEILKKLPTKSLMRFRCVSKPWSFIISKRRDFVES.

The polypeptide is F-box protein At1g52495 (Arabidopsis thaliana (Mouse-ear cress)).